Reading from the N-terminus, the 347-residue chain is Ryncolin-2 (347 aa).

The first 19 residues, 1-19, serve as a signal peptide directing secretion; it reads MKPWAAFHLIFLVASSLEG. Residues 49–115 form a disordered region; sequence LQSQPGIPGI…DKGDKGDKGD (67 aa). The region spanning 57 to 114 is the Collagen-like domain; the sequence is GIPGVPGINGSEGLKGDPGPQGLPGETGFDGIPGVAGPKGDKGDQGDKGDKGDKGDKG. Basic and acidic residues predominate over residues 95–115; that stretch reads KGDKGDQGDKGDKGDKGDKGD. One can recognise a Fibrinogen C-terminal domain in the interval 121–341; it reads DCPPTDVEVR…YADMKIRPQQ (221 aa). 2 disulfides stabilise this stretch: Cys132–Cys160 and Cys284–Cys297.

Belongs to the ficolin lectin family. Veficolin subfamily. Post-translationally, hydroxylated, possibly at Pro-74 and Pro-94. In terms of tissue distribution, expressed by the venom duct.

It is found in the secreted. Functionally, initiates complement activation and/or interferes in platelet aggregation and/or blood coagulation. The polypeptide is Ryncolin-2 (Cerberus rynchops (Dog-faced water snake)).